A 104-amino-acid chain; its full sequence is Large ribosomal subunit protein bL28 (104 aa).

Belongs to the bacterial ribosomal protein bL28 family.

The polypeptide is Large ribosomal subunit protein bL28 (Wolbachia sp. subsp. Brugia malayi (strain TRS)).